The following is a 107-amino-acid chain: Nucleoid-associated protein RC1_2305 (107 aa).

It belongs to the YbaB/EbfC family. Homodimer.

It localises to the cytoplasm. It is found in the nucleoid. Functionally, binds to DNA and alters its conformation. May be involved in regulation of gene expression, nucleoid organization and DNA protection. The chain is Nucleoid-associated protein RC1_2305 from Rhodospirillum centenum (strain ATCC 51521 / SW).